The primary structure comprises 287 residues: Small ribosomal subunit biogenesis GTPase RsgA (287 aa).

In terms of domain architecture, CP-type G spans 61-218; it reads SSELIRPTVA…LVDTPGFTTL (158 aa). GTP contacts are provided by residues 110–113 and 161–169; these read NKED and GPSGAGKST. Zn(2+) contacts are provided by C242, C247, H249, and C255.

It belongs to the TRAFAC class YlqF/YawG GTPase family. RsgA subfamily. As to quaternary structure, monomer. Associates with 30S ribosomal subunit, binds 16S rRNA. It depends on Zn(2+) as a cofactor.

It localises to the cytoplasm. One of several proteins that assist in the late maturation steps of the functional core of the 30S ribosomal subunit. Helps release RbfA from mature subunits. May play a role in the assembly of ribosomal proteins into the subunit. Circularly permuted GTPase that catalyzes slow GTP hydrolysis, GTPase activity is stimulated by the 30S ribosomal subunit. This Clostridium perfringens (strain ATCC 13124 / DSM 756 / JCM 1290 / NCIMB 6125 / NCTC 8237 / Type A) protein is Small ribosomal subunit biogenesis GTPase RsgA.